Reading from the N-terminus, the 347-residue chain is GMP reductase (347 aa).

Residue 108-131 (AEFEKVKKIMALSEEFVFICIDIA) participates in NADP(+) binding. 2 residues coordinate K(+): glycine 181 and glycine 183. Catalysis depends on cysteine 186, which acts as the Thioimidate intermediate. 216–239 (IIGDGGCSCAGDVSKAFGGGADFV) is a binding site for NADP(+).

The protein belongs to the IMPDH/GMPR family. GuaC type 1 subfamily. Homotetramer.

It carries out the reaction IMP + NH4(+) + NADP(+) = GMP + NADPH + 2 H(+). In terms of biological role, catalyzes the irreversible NADPH-dependent deamination of GMP to IMP. It functions in the conversion of nucleobase, nucleoside and nucleotide derivatives of G to A nucleotides, and in maintaining the intracellular balance of A and G nucleotides. This is GMP reductase from Vibrio atlanticus (strain LGP32) (Vibrio splendidus (strain Mel32)).